The following is a 131-amino-acid chain: NADPH-dependent 7-cyano-7-deazaguanine reductase (131 aa).

The Thioimide intermediate role is filled by Cys-41. Catalysis depends on Asp-48, which acts as the Proton donor. Substrate-binding positions include Val-63–Leu-65 and His-82–Glu-83.

The protein belongs to the GTP cyclohydrolase I family. QueF type 1 subfamily.

Its subcellular location is the cytoplasm. It carries out the reaction 7-aminomethyl-7-carbaguanine + 2 NADP(+) = 7-cyano-7-deazaguanine + 2 NADPH + 3 H(+). Its pathway is tRNA modification; tRNA-queuosine biosynthesis. Its function is as follows. Catalyzes the NADPH-dependent reduction of 7-cyano-7-deazaguanine (preQ0) to 7-aminomethyl-7-deazaguanine (preQ1). In Nitratiruptor sp. (strain SB155-2), this protein is NADPH-dependent 7-cyano-7-deazaguanine reductase.